The sequence spans 447 residues: Glutamate--tRNA ligase 1 (447 aa).

Residues 10 to 20 carry the 'HIGH' region motif; the sequence is PSPTGMLHVGN. Residues 240–244 carry the 'KMSKS' region motif; the sequence is KISKR. Lys-243 is an ATP binding site.

This sequence belongs to the class-I aminoacyl-tRNA synthetase family. Glutamate--tRNA ligase type 1 subfamily. As to quaternary structure, monomer.

The protein localises to the cytoplasm. The enzyme catalyses tRNA(Glu) + L-glutamate + ATP = L-glutamyl-tRNA(Glu) + AMP + diphosphate. Functionally, catalyzes the attachment of glutamate to tRNA(Glu) in a two-step reaction: glutamate is first activated by ATP to form Glu-AMP and then transferred to the acceptor end of tRNA(Glu). The polypeptide is Glutamate--tRNA ligase 1 (Rickettsia rickettsii (strain Sheila Smith)).